Here is a 228-residue protein sequence, read N- to C-terminus: DNA mismatch repair protein MutH (228 aa).

Belongs to the MutH family.

The protein resides in the cytoplasm. Sequence-specific endonuclease that cleaves unmethylated GATC sequences. It is involved in DNA mismatch repair. The chain is DNA mismatch repair protein MutH from Serratia proteamaculans (strain 568).